A 1637-amino-acid polypeptide reads, in one-letter code: Kinesin-like protein KIF21B (1637 aa).

In terms of domain architecture, Kinesin motor spans 8–370 (CVKVAVRIRP…LKYANRARNI (363 aa)). Residue 87–94 (GQTGAGKT) participates in ATP binding. Coiled-coil stretches lie at residues 376-604 (VNQD…EEEG) and 631-824 (NFQA…ALRR). Positions 400–1099 (MEYKAGKRVI…LQALIYNVQQ (700 aa)) are interaction with TRIM3. A compositionally biased stretch (low complexity) spans 509-533 (ASARSPYSLGASPAAPAFGGSPASS). Disordered stretches follow at residues 509-538 (ASAR…EDAS) and 552-628 (KKKE…PEEK). Residues 578–627 (NSEETDENEAEEEEEERDESGCEEEEGREDEDEDSGSEESLVDSDSDPEE) are compositionally biased toward acidic residues. Phosphoserine is present on Ser579. At Thr582 the chain carries Phosphothreonine. Disordered regions lie at residues 830–865 (SERV…GARS) and 880–906 (FLGD…GASQ). The span at 846-865 (SGAEVSASTTSSEAESGARS) shows a compositional bias: low complexity. Residues 928–1016 (MQRMTIVNLE…EETKEELDST (89 aa)) adopt a coiled-coil conformation. Residues Ser1149, Ser1167, and Ser1215 each carry the phosphoserine modification. Polar residues predominate over residues 1194–1217 (RTVSLPTRGSTFPRQSRATETSPL). The interval 1194–1251 (RTVSLPTRGSTFPRQSRATETSPLTRRKSYDRGQPIRSTDVGFTPPSSPPTRPRNDRN) is disordered. Thr1237 bears the Phosphothreonine mark. Ser1241 is modified (phosphoserine). WD repeat units lie at residues 1306-1343 (GHTK…EIAA), 1346-1384 (GHPN…KCIR), 1410-1448 (QGEH…PVGK), 1451-1493 (GHIG…TGTI), 1502-1539 (PHYD…LIQQ), 1543-1582 (AHKD…PIGE), and 1585-1622 (GHDS…TPCL).

Belongs to the TRAFAC class myosin-kinesin ATPase superfamily. Kinesin family. Interacts with TRIM3; the interaction positively affects motility of KIF21B. Interacts with GABARAP and GABA(A) receptor subunits: GABRG2, GABRA1 and GABRA2. May interact with GABA(A) receptor subunits: GABRB2 and GABRB3.

It localises to the cytoplasm. Its subcellular location is the cytoskeleton. It is found in the cell projection. The protein resides in the dendrite. The protein localises to the growth cone. It localises to the axon. Its subcellular location is the cytoplasmic vesicle. Plus-end directed microtubule-dependent motor protein which displays processive activity. Is involved in regulation of microtubule dynamics, synapse function and neuronal morphology, including dendritic tree branching and spine formation. Plays a role in lerning and memory. Involved in delivery of gamma-aminobutyric acid (GABA(A)) receptor to cell surface. This Homo sapiens (Human) protein is Kinesin-like protein KIF21B (KIF21B).